We begin with the raw amino-acid sequence, 176 residues long: Flavodoxin (176 aa).

Residues 4-172 (IGIFFGTDTG…RLASWLEEIK (169 aa)) enclose the Flavodoxin-like domain.

Belongs to the flavodoxin family. It depends on FMN as a cofactor.

Functionally, low-potential electron donor to a number of redox enzymes. NifF is the electron donor to nitrogenase. The sequence is that of Flavodoxin (nifF) from Klebsiella pneumoniae.